The following is a 460-amino-acid chain: Chromosomal replication initiator protein DnaA 2 (460 aa).

Residues 1-68 form a domain I, interacts with DnaA modulators region; sequence MRAWEDFLLL…KTSLVNNNGK (68 aa). Residues 68 to 102 form a domain II region; sequence KLIRVHITSLDKTAPFYKEKQIQQEKTAYFTMQYG. The tract at residues 103–321 is domain III, AAA+ region; that stretch reads NVNPEMTFGN…DALKLLSKRV (219 aa). Residues G151, G153, K154, and T155 each contribute to the ATP site. The domain IV, binds dsDNA stretch occupies residues 322-460; sequence AYKKLAQQLL…EFFPEEEISC (139 aa).

Belongs to the DnaA family. Oligomerizes as a right-handed, spiral filament on DNA at oriC.

It localises to the cytoplasm. Plays an essential role in the initiation and regulation of chromosomal replication. ATP-DnaA binds to the origin of replication (oriC) to initiate formation of the DNA replication initiation complex once per cell cycle. Binds the DnaA box (a 9 base pair repeat at the origin) and separates the double-stranded (ds)DNA. Forms a right-handed helical filament on oriC DNA; dsDNA binds to the exterior of the filament while single-stranded (ss)DNA is stabiized in the filament's interior. The ATP-DnaA-oriC complex binds and stabilizes one strand of the AT-rich DNA unwinding element (DUE), permitting loading of DNA polymerase. After initiation quickly degrades to an ADP-DnaA complex that is not apt for DNA replication. Binds acidic phospholipids. In Chlamydia caviae (strain ATCC VR-813 / DSM 19441 / 03DC25 / GPIC) (Chlamydophila caviae), this protein is Chromosomal replication initiator protein DnaA 2.